The following is a 371-amino-acid chain: Putative glutamate--cysteine ligase 2 (371 aa).

It belongs to the glutamate--cysteine ligase type 2 family. YbdK subfamily.

It carries out the reaction L-cysteine + L-glutamate + ATP = gamma-L-glutamyl-L-cysteine + ADP + phosphate + H(+). ATP-dependent carboxylate-amine ligase which exhibits weak glutamate--cysteine ligase activity. The polypeptide is Putative glutamate--cysteine ligase 2 (Cupriavidus pinatubonensis (strain JMP 134 / LMG 1197) (Cupriavidus necator (strain JMP 134))).